A 436-amino-acid chain; its full sequence is Trigger factor (436 aa).

One can recognise a PPIase FKBP-type domain in the interval 163 to 248 (GDRVTVDFEG…VKKIEAAHLP (86 aa)).

Belongs to the FKBP-type PPIase family. Tig subfamily.

It is found in the cytoplasm. It catalyses the reaction [protein]-peptidylproline (omega=180) = [protein]-peptidylproline (omega=0). Involved in protein export. Acts as a chaperone by maintaining the newly synthesized protein in an open conformation. Functions as a peptidyl-prolyl cis-trans isomerase. The polypeptide is Trigger factor (Acidovorax ebreus (strain TPSY) (Diaphorobacter sp. (strain TPSY))).